A 291-amino-acid polypeptide reads, in one-letter code: ATP synthase gamma chain (291 aa).

Belongs to the ATPase gamma chain family. As to quaternary structure, F-type ATPases have 2 components, CF(1) - the catalytic core - and CF(0) - the membrane proton channel. CF(1) has five subunits: alpha(3), beta(3), gamma(1), delta(1), epsilon(1). CF(0) has three main subunits: a, b and c.

The protein localises to the cell inner membrane. In terms of biological role, produces ATP from ADP in the presence of a proton gradient across the membrane. The gamma chain is believed to be important in regulating ATPase activity and the flow of protons through the CF(0) complex. The chain is ATP synthase gamma chain from Burkholderia ambifaria (strain MC40-6).